We begin with the raw amino-acid sequence, 207 residues long: Putative acetyltransferase C18B11.09c (207 aa).

It belongs to the transferase hexapeptide repeat family.

The chain is Putative acetyltransferase C18B11.09c from Schizosaccharomyces pombe (strain 972 / ATCC 24843) (Fission yeast).